Reading from the N-terminus, the 271-residue chain is MRLYRDNAVVLRQHKLGEADRIVTLLTRQHGLVRAVAKGVRRTKSKFGARLEPFAHIDVQLYPGRNLDIVTQVQTVDAFATDIVDDYSRYTTACAILETAERLAGEERAPAPQLHRLTVGALRAVAEHNRPCELILDAFLLRAMGFAGWAPALDDCARCSAPGPHRAFHVAAGGAVCVHCRPPGAATPSPGVLDLMDALIRGDWASTEDVPESLRGQASGLVAAHLQWHLERQLRTLPLIERARPHAAVRVEDSVRQDGDRDSTTRTSSPA.

Residues 249–264 are compositionally biased toward basic and acidic residues; the sequence is VRVEDSVRQDGDRDST. A disordered region spans residues 249–271; that stretch reads VRVEDSVRQDGDRDSTTRTSSPA.

This sequence belongs to the RecO family.

Functionally, involved in DNA repair and RecF pathway recombination. This chain is DNA repair protein RecO, found in Rhodococcus jostii (strain RHA1).